We begin with the raw amino-acid sequence, 1165 residues long: Tectonin beta-propeller repeat-containing protein 1 (1165 aa).

4 TECPR repeats span residues Leu209–Asp240, Asp254–Glu285, Ser301–Val332, and Asp344–Ile376. A phosphoserine mark is found at Ser386, Ser388, Ser391, Ser412, and Ser417. Residues Arg404–Pro486 are disordered. The PH domain occupies Lys611–Cys717. A TECPR 5 repeat occupies Gln729 to Leu756. Residues Ser938 and Ser949 each carry the phosphoserine modification. 4 TECPR repeats span residues Ile953–Gly984, Tyr998–Pro1029, Thr1044–Ser1075, and Asp1087–Ile1127. A disordered region spans residues Ala1140–Cys1165. The segment covering Ala1143 to Pro1153 has biased composition (low complexity).

This sequence belongs to the TECPR1 family. Interacts with ATG5; the interaction is direct. Interacts with WIPI2. Interacts with the ATG5-ATG12 conjugate, the interaction is however mutually exclusive with ATG16, since it does not interact with ATG12-ATG5-ATG16 complex.

The protein resides in the cytoplasmic vesicle. It is found in the autophagosome membrane. The protein localises to the lysosome membrane. Tethering factor involved in autophagy. Involved in autophagosome maturation by promoting the autophagosome fusion with lysosomes: acts by associating with both the ATG5-ATG12 conjugate and phosphatidylinositol-3-phosphate (PtdIns(3)P) present at the surface of autophagosomes. Also involved in selective autophagy against bacterial pathogens, by being required for phagophore/preautophagosomal structure biogenesis and maturation. The polypeptide is Tectonin beta-propeller repeat-containing protein 1 (TECPR1) (Homo sapiens (Human)).